A 319-amino-acid polypeptide reads, in one-letter code: Cytochrome f (319 aa).

An N-terminal signal peptide occupies residues 1-34; that stretch reads MQNRNTYDLKKKMTRLISVLVMIHIITRTSISNA. Positions 35, 55, 58, and 59 each coordinate heme. Residues 285 to 304 form a helical membrane-spanning segment; it reads VKGLLLFLASVILAQIFLVL.

It belongs to the cytochrome f family. As to quaternary structure, the 4 large subunits of the cytochrome b6-f complex are cytochrome b6, subunit IV (17 kDa polypeptide, petD), cytochrome f and the Rieske protein, while the 4 small subunits are PetG, PetL, PetM and PetN. The complex functions as a dimer. It depends on heme as a cofactor.

It localises to the plastid. Its subcellular location is the chloroplast thylakoid membrane. Functionally, component of the cytochrome b6-f complex, which mediates electron transfer between photosystem II (PSII) and photosystem I (PSI), cyclic electron flow around PSI, and state transitions. The chain is Cytochrome f (petA) from Picea abies (Norway spruce).